Consider the following 203-residue polypeptide: Urease accessory protein UreE (203 aa).

The span at 170 to 190 shows a compositional bias: basic and acidic residues; the sequence is EHHGHSHSRSHDHDHDHDHQH. The interval 170 to 203 is disordered; it reads EHHGHSHSRSHDHDHDHDHQHGPSCSHGHHHGHR.

Belongs to the UreE family.

It is found in the cytoplasm. Functionally, involved in urease metallocenter assembly. Binds nickel. Probably functions as a nickel donor during metallocenter assembly. The sequence is that of Urease accessory protein UreE from Burkholderia pseudomallei (strain 1710b).